Consider the following 635-residue polypeptide: 1-deoxy-D-xylulose-5-phosphate synthase (635 aa).

Residues histidine 72 and 113–115 each bind thiamine diphosphate; that span reads GHA. Aspartate 144 provides a ligand contact to Mg(2+). Residues 145–146, asparagine 174, tyrosine 287, and glutamate 370 contribute to the thiamine diphosphate site; that span reads GA. Asparagine 174 provides a ligand contact to Mg(2+).

It belongs to the transketolase family. DXPS subfamily. In terms of assembly, homodimer. Mg(2+) serves as cofactor. Requires thiamine diphosphate as cofactor.

The catalysed reaction is D-glyceraldehyde 3-phosphate + pyruvate + H(+) = 1-deoxy-D-xylulose 5-phosphate + CO2. The protein operates within metabolic intermediate biosynthesis; 1-deoxy-D-xylulose 5-phosphate biosynthesis; 1-deoxy-D-xylulose 5-phosphate from D-glyceraldehyde 3-phosphate and pyruvate: step 1/1. In terms of biological role, catalyzes the acyloin condensation reaction between C atoms 2 and 3 of pyruvate and glyceraldehyde 3-phosphate to yield 1-deoxy-D-xylulose-5-phosphate (DXP). The sequence is that of 1-deoxy-D-xylulose-5-phosphate synthase from Trichodesmium erythraeum (strain IMS101).